Consider the following 93-residue polypeptide: uncharacterized protein (93 aa).

Positions 25-68 form a coiled coil; the sequence is DIKKLSQVKSELEQGKALLEEEKKELIEKNSNLNLQISNMNHLK.

This is an uncharacterized protein from Dictyostelium discoideum (Social amoeba).